Reading from the N-terminus, the 155-residue chain is MAKGEGNVIAQNKKARHDYTIVDTVEAGMVLTGTEIKSIRAGRINLKDGFAQIKQGEAWLVNVHIAPYDEGNIWNQEPTRTRKLLLRKKQIESLDNEVKGTGMTLVPLKVYIKDGFAKVLIGLAKGKHDYDKRESIKRREQDRDIKRTMKAINSR.

This sequence belongs to the SmpB family.

The protein resides in the cytoplasm. Required for rescue of stalled ribosomes mediated by trans-translation. Binds to transfer-messenger RNA (tmRNA), required for stable association of tmRNA with ribosomes. tmRNA and SmpB together mimic tRNA shape, replacing the anticodon stem-loop with SmpB. tmRNA is encoded by the ssrA gene; the 2 termini fold to resemble tRNA(Ala) and it encodes a 'tag peptide', a short internal open reading frame. During trans-translation Ala-aminoacylated tmRNA acts like a tRNA, entering the A-site of stalled ribosomes, displacing the stalled mRNA. The ribosome then switches to translate the ORF on the tmRNA; the nascent peptide is terminated with the 'tag peptide' encoded by the tmRNA and targeted for degradation. The ribosome is freed to recommence translation, which seems to be the essential function of trans-translation. This is SsrA-binding protein from Streptococcus suis (strain 98HAH33).